Reading from the N-terminus, the 88-residue chain is Co-chaperonin GroES (88 aa).

Belongs to the GroES chaperonin family. Heptamer of 7 subunits arranged in a ring. Interacts with the chaperonin GroEL.

It localises to the cytoplasm. Its function is as follows. Together with the chaperonin GroEL, plays an essential role in assisting protein folding. The GroEL-GroES system forms a nano-cage that allows encapsulation of the non-native substrate proteins and provides a physical environment optimized to promote and accelerate protein folding. GroES binds to the apical surface of the GroEL ring, thereby capping the opening of the GroEL channel. This Rubrobacter xylanophilus (strain DSM 9941 / JCM 11954 / NBRC 16129 / PRD-1) protein is Co-chaperonin GroES.